We begin with the raw amino-acid sequence, 698 residues long: Polyribonucleotide nucleotidyltransferase (698 aa).

Residues D485 and D491 each contribute to the Mg(2+) site. Residues 552-611 (PRITTIKINPEKIRDVIGKGGAVIRALTEETGTTIELDDNGTVKIASSNGEATKEAIRRI) enclose the KH domain. The S1 motif domain maps to 621–689 (GRIYNGKVIR…RQGRVRLSIK (69 aa)).

It belongs to the polyribonucleotide nucleotidyltransferase family. Component of the RNA degradosome, which is a multiprotein complex involved in RNA processing and mRNA degradation. Requires Mg(2+) as cofactor.

It is found in the cytoplasm. The enzyme catalyses RNA(n+1) + phosphate = RNA(n) + a ribonucleoside 5'-diphosphate. In terms of biological role, involved in mRNA degradation. Catalyzes the phosphorolysis of single-stranded polyribonucleotides processively in the 3'- to 5'-direction. The chain is Polyribonucleotide nucleotidyltransferase from Shewanella frigidimarina (strain NCIMB 400).